A 119-amino-acid polypeptide reads, in one-letter code: Ribonuclease P protein component (119 aa).

The protein belongs to the RnpA family. In terms of assembly, consists of a catalytic RNA component (M1 or rnpB) and a protein subunit.

It carries out the reaction Endonucleolytic cleavage of RNA, removing 5'-extranucleotides from tRNA precursor.. In terms of biological role, RNaseP catalyzes the removal of the 5'-leader sequence from pre-tRNA to produce the mature 5'-terminus. It can also cleave other RNA substrates such as 4.5S RNA. The protein component plays an auxiliary but essential role in vivo by binding to the 5'-leader sequence and broadening the substrate specificity of the ribozyme. This Borreliella burgdorferi (strain ATCC 35210 / DSM 4680 / CIP 102532 / B31) (Borrelia burgdorferi) protein is Ribonuclease P protein component.